Reading from the N-terminus, the 384-residue chain is Prokineticin receptor 2 (384 aa).

Topologically, residues 1–53 (MAAQNGNASFPANFSIPQEHASSLPFNFSYDDYDLPLDEDEDMTKTQTFFAAK) are extracellular. Asn7, Asn13, and Asn27 each carry an N-linked (GlcNAc...) asparagine glycan. A helical transmembrane segment spans residues 54 to 74 (IVIGVALVGIMLTCGIGNFVF). Over 75 to 89 (ITALTRYKKLRNLTN) the chain is Cytoplasmic. Residues 90 to 110 (LLIANLAISDFLVAIICCPFE) traverse the membrane as a helical segment. The Extracellular portion of the chain corresponds to 111-137 (MDYYVVHQLSWEHGHVLCACINYLRTV). A disulfide bridge connects residues Cys128 and Cys208. A helical transmembrane segment spans residues 138–158 (SLYVSTNALLAIAIDRYLAIV). The Cytoplasmic portion of the chain corresponds to 159-171 (HPLKPRMNYQTAS). A helical membrane pass occupies residues 172–192 (FLIALVWMVSILISIPSAYFT). At 193-223 (KETVLFIVKNQKKIFCGQVWPVDQQLYYKSY) the chain is on the extracellular side. A helical membrane pass occupies residues 224–244 (FLFVFGIEFLGPVFTMTLCYA). Residues 245-273 (RISRELWFKAVPGFQTEQIRKRLRCRRKT) are Cytoplasmic-facing. The helical transmembrane segment at 274 to 294 (VLVLMCILTAYVLCWAPFYGF) threads the bilayer. Over 295-313 (TIVRDFFPTVFVKEKHYLT) the chain is Extracellular. A helical transmembrane segment spans residues 314 to 334 (AFYVVECIAMSNSMINTVCFV). The Cytoplasmic portion of the chain corresponds to 335-384 (TVKNSTMKYFKKMLLLHWRPSHHGSKSSADLDLKTSRLPATEEVDCIRLK).

The protein belongs to the G-protein coupled receptor 1 family. In terms of assembly, homodimer.

It localises to the cell membrane. Receptor for prokineticin 2. Exclusively coupled to the G(q) subclass of heteromeric G proteins. Activation leads to mobilization of calcium, stimulation of phosphoinositide turnover and activation of p44/p42 mitogen-activated protein kinase. This Bos taurus (Bovine) protein is Prokineticin receptor 2 (PROKR2).